The following is a 98-amino-acid chain: Keratin-associated protein 3-1 (98 aa).

Ala2 is modified (N-acetylalanine). A run of 4 repeats spans residues 3–7, 8–12, 47–51, and 55–59. The 4 X 5 AA repeats of C-C-X(3) stretch occupies residues 3–59; the sequence is CCAPRCCSVRTGPATTICSSDQFCRCGVCLPSTCPHDISLLQPTFCDNSPVPYHVPD.

This sequence belongs to the KRTAP type 3 family. Interacts with wool keratins. In terms of tissue distribution, wool.

Its function is as follows. In the wool cortex, wool keratin intermediate filaments are embedded in an interfilamentous matrix, consisting of hair keratin-associated proteins (KRTAP), which are essential for the formation of a rigid and resistant wool shaft through their extensive disulfide bond cross-linking with abundant cysteine residues of wool keratins. The matrix proteins include the high-sulfur and high-glycine-tyrosine keratins. This Capra hircus (Goat) protein is Keratin-associated protein 3-1 (KRTAP3-1).